A 466-amino-acid chain; its full sequence is Cysteine--tRNA ligase (466 aa).

Residue cysteine 28 coordinates Zn(2+). Positions 30-40 (PTVYNYIHIGN) match the 'HIGH' region motif. Zn(2+) contacts are provided by cysteine 208, histidine 233, and glutamate 237. The 'KMSKS' region motif lies at 265-269 (KMSKS). Position 268 (lysine 268) interacts with ATP.

The protein belongs to the class-I aminoacyl-tRNA synthetase family. As to quaternary structure, monomer. Zn(2+) serves as cofactor.

It localises to the cytoplasm. It catalyses the reaction tRNA(Cys) + L-cysteine + ATP = L-cysteinyl-tRNA(Cys) + AMP + diphosphate. In Staphylococcus epidermidis (strain ATCC 35984 / DSM 28319 / BCRC 17069 / CCUG 31568 / BM 3577 / RP62A), this protein is Cysteine--tRNA ligase.